The primary structure comprises 456 residues: Frizzled/smoothened-like sans CRD protein F (456 aa).

The signal sequence occupies residues 1–30 (MIFNNLKNQNKIINFLIIFYFLSFLKQIES). Residues 31 to 92 (QSINITSSSS…PFFTINEWNK (62 aa)) lie on the Extracellular side of the membrane. Asn-34, Asn-52, and Asn-70 each carry an N-linked (GlcNAc...) asparagine glycan. A helical transmembrane segment spans residues 93-113 (FLNMSLVMGTISFFSGLFLLV). Residues 114–127 (TYSPIVNKTHNRHT) lie on the Cytoplasmic side of the membrane. The chain crosses the membrane as a helical span at residues 128–148 (IGVMCMSFGVCLAMCSDMWNF). The Extracellular segment spans residues 149 to 174 (GSNFTEKSICPSPGQYLSTSNARCLS). Asn-151 carries an N-linked (GlcNAc...) asparagine glycan. A helical transmembrane segment spans residues 175 to 195 (SGIFLQFGGVFGFLNWTLLSF). Residues 196–211 (DLFMNIKGIITKNYDK) are Cytoplasmic-facing. The chain crosses the membrane as a helical span at residues 212–232 (YYVSGTFIIAIIFTFVPIVND). Over 233–252 (QYSMSYIGLGCWLGSAMYQL) the chain is Extracellular. Residues 253 to 273 (IFFWILLSICLIVSSVFIILI) traverse the membrane as a helical segment. Topologically, residues 274–297 (LKEVYIIIKLSKQKTSLKGNIRPL) are cytoplasmic. A helical transmembrane segment spans residues 298–318 (ICISITGFAFFYMFFYYISIV). Residues 319-354 (VEGDYYERVLNEYTDCLMDPTKDISECKSPRMSVAS) are Extracellular-facing. A helical membrane pass occupies residues 355–375 (EFVFLLCLRLLGIGAFIFYGI). Residues 376-456 (NNKVKKIWLN…ESSLNSVDEI (81 aa)) lie on the Cytoplasmic side of the membrane. Residues 403-422 (ADNDKSNSNGSKVLYRTNNT) are disordered.

Belongs to the G-protein coupled receptor Fz/Smo family.

The protein localises to the membrane. This chain is Frizzled/smoothened-like sans CRD protein F (fscF), found in Dictyostelium discoideum (Social amoeba).